The primary structure comprises 272 residues: Enoyl-[acyl-carrier-protein] reductase [NADH] 1 (272 aa).

NAD(+) contacts are provided by residues Gly17, 23 to 24 (SI), Gln44, 68 to 69 (DV), and Ile96. Residues Tyr149 and Tyr159 each act as proton acceptor in the active site. NAD(+) is bound by residues Lys166 and 195 to 199 (IKTLA).

The protein belongs to the short-chain dehydrogenases/reductases (SDR) family. FabI subfamily.

The protein localises to the cell inner membrane. It carries out the reaction a 2,3-saturated acyl-[ACP] + NAD(+) = a (2E)-enoyl-[ACP] + NADH + H(+). It functions in the pathway lipid metabolism; fatty acid biosynthesis. This chain is Enoyl-[acyl-carrier-protein] reductase [NADH] 1 (fabI1), found in Rhizobium meliloti (strain 1021) (Ensifer meliloti).